A 190-amino-acid polypeptide reads, in one-letter code: MEHESKNKVDGMEMEKGKKESGSRKGLELTMRVLALVLTMVAATVLGVAKQTKVVPIKLIPTLPPLNVSTTAKASYLSAFVYNISANAIACGYTAISIVIVMISKGKRSKSLLMAVLIGDLMMVALLFSSTGAAGAIGLMGRHGNKHVMWKKVCGVFGKFCNQAAVSVAITLIASVVFMLLVVLDALKLP.

Positions 1 to 23 (MEHESKNKVDGMEMEKGKKESGS) are disordered. Residues 1 to 28 (MEHESKNKVDGMEMEKGKKESGSRKGLE) are Cytoplasmic-facing. A helical transmembrane segment spans residues 29 to 49 (LTMRVLALVLTMVAATVLGVA). Residues 50–83 (KQTKVVPIKLIPTLPPLNVSTTAKASYLSAFVYN) are Extracellular-facing. Residue Asn-67 is glycosylated (N-linked (GlcNAc...) asparagine). Residues 84–104 (ISANAIACGYTAISIVIVMIS) form a helical membrane-spanning segment. Residues 105–111 (KGKRSKS) lie on the Cytoplasmic side of the membrane. Residues 112–132 (LLMAVLIGDLMMVALLFSSTG) form a helical membrane-spanning segment. Topologically, residues 133–163 (AAGAIGLMGRHGNKHVMWKKVCGVFGKFCNQ) are extracellular. The chain crosses the membrane as a helical span at residues 164 to 184 (AAVSVAITLIASVVFMLLVVL). The Cytoplasmic segment spans residues 185 to 190 (DALKLP).

It belongs to the Casparian strip membrane proteins (CASP) family. Homodimer and heterodimers.

Its subcellular location is the cell membrane. This Arabidopsis thaliana (Mouse-ear cress) protein is CASP-like protein 1E1.